We begin with the raw amino-acid sequence, 183 residues long: Nucleoplasmin-like protein NO29 (183 aa).

Over residues 126–166 the composition is skewed to acidic residues; it reads SDDEDLSGSEEEMEDEEEEEDDDDDDDDDDDDDDDDDEEEI. The interval 126 to 183 is disordered; sequence SDDEDLSGSEEEMEDEEEEEDDDDDDDDDDDDDDDDDEEEITPIKPAKKPLKTLSRTF.

This sequence belongs to the nucleoplasmin family.

Its subcellular location is the nucleus. It localises to the nucleolus. The polypeptide is Nucleoplasmin-like protein NO29 (Xenopus laevis (African clawed frog)).